A 352-amino-acid polypeptide reads, in one-letter code: Ferrochelatase (352 aa).

Fe cation contacts are provided by H222 and E303.

It belongs to the ferrochelatase family.

It is found in the cytoplasm. The enzyme catalyses heme b + 2 H(+) = protoporphyrin IX + Fe(2+). The protein operates within porphyrin-containing compound metabolism; protoheme biosynthesis; protoheme from protoporphyrin-IX: step 1/1. Its function is as follows. Catalyzes the ferrous insertion into protoporphyrin IX. The sequence is that of Ferrochelatase from Brucella abortus (strain S19).